Here is a 109-residue protein sequence, read N- to C-terminus: Flowering-promoting factor 1-like protein 1 (109 aa).

A D-box motif is present at residues 73-81 (RGSLDLISL).

The protein belongs to the FPF1 family. As to quaternary structure, interacts with RPT4. Ubiquitinated. RPT4 mediates its proteasome-dependent degradation. In terms of tissue distribution, specifically expressed in the apical meristem, the elongation zone of root tip, steles of the branch zone, and the young lateral root. Also expressed in spikes. Expressed in roots and spikes (at protein level).

The protein resides in the cytoplasm. The protein localises to the nucleus. GTP-binding protein that functions in the development of root systems, which are mediated by auxin. Acts as a cell cycle regulator during root development. Proteasome-mediated degradation of the protein is necessary for the transition of metaphase to anaphase in mitosis. The protein is Flowering-promoting factor 1-like protein 1 (RAA1) of Oryza sativa subsp. japonica (Rice).